Reading from the N-terminus, the 277-residue chain is 4-hydroxy-tetrahydrodipicolinate reductase (277 aa).

NAD(+) contacts are provided by residues 10-15 (GAGGRM) and Glu-36. NADP(+) is bound at residue Arg-37. NAD(+)-binding positions include 100-102 (GTT) and 124-127 (SGNM). Residue His-158 is the Proton donor/acceptor of the active site. A (S)-2,3,4,5-tetrahydrodipicolinate-binding site is contributed by His-159. Lys-162 serves as the catalytic Proton donor. 168-169 (GT) contributes to the (S)-2,3,4,5-tetrahydrodipicolinate binding site.

This sequence belongs to the DapB family.

It localises to the cytoplasm. It catalyses the reaction (S)-2,3,4,5-tetrahydrodipicolinate + NAD(+) + H2O = (2S,4S)-4-hydroxy-2,3,4,5-tetrahydrodipicolinate + NADH + H(+). It carries out the reaction (S)-2,3,4,5-tetrahydrodipicolinate + NADP(+) + H2O = (2S,4S)-4-hydroxy-2,3,4,5-tetrahydrodipicolinate + NADPH + H(+). The protein operates within amino-acid biosynthesis; L-lysine biosynthesis via DAP pathway; (S)-tetrahydrodipicolinate from L-aspartate: step 4/4. In terms of biological role, catalyzes the conversion of 4-hydroxy-tetrahydrodipicolinate (HTPA) to tetrahydrodipicolinate. The polypeptide is 4-hydroxy-tetrahydrodipicolinate reductase (Chelativorans sp. (strain BNC1)).